Here is a 146-residue protein sequence, read N- to C-terminus: Ribonuclease H (146 aa).

An RNase H type-1 domain is found at 1-141 (MKKVQLITDG…CDELATRAAR (141 aa)). Residues D9, E47, D69, and D133 each coordinate Mg(2+).

Belongs to the RNase H family. Monomer. Mg(2+) is required as a cofactor.

It localises to the cytoplasm. The catalysed reaction is Endonucleolytic cleavage to 5'-phosphomonoester.. Functionally, endonuclease that specifically degrades the RNA of RNA-DNA hybrids. This chain is Ribonuclease H, found in Solibacter usitatus (strain Ellin6076).